The chain runs to 255 residues: Acetylglutamate kinase (255 aa).

Substrate-binding positions include 40–41, Arg62, and Asn157; that span reads GG.

It belongs to the acetylglutamate kinase family. ArgB subfamily.

It localises to the cytoplasm. It carries out the reaction N-acetyl-L-glutamate + ATP = N-acetyl-L-glutamyl 5-phosphate + ADP. The protein operates within amino-acid biosynthesis; L-arginine biosynthesis; N(2)-acetyl-L-ornithine from L-glutamate: step 2/4. In terms of biological role, catalyzes the ATP-dependent phosphorylation of N-acetyl-L-glutamate. The sequence is that of Acetylglutamate kinase from Parabacteroides distasonis (strain ATCC 8503 / DSM 20701 / CIP 104284 / JCM 5825 / NCTC 11152).